The following is a 181-amino-acid chain: Oligoribonuclease (181 aa).

Positions 8–171 (LIWIDLEMTG…DDIRESVAEL (164 aa)) constitute an Exonuclease domain. The active site involves Tyr-129.

Belongs to the oligoribonuclease family.

The protein resides in the cytoplasm. Functionally, 3'-to-5' exoribonuclease specific for small oligoribonucleotides. This chain is Oligoribonuclease, found in Shigella flexneri.